Here is a 190-residue protein sequence, read N- to C-terminus: Interferon alpha-11 (190 aa).

The N-terminal stretch at 1–23 (MARLCAFLMILIVMSYWSTCSLG) is a signal peptide. Intrachain disulfides connect C24/C122 and C52/C162. An N-linked (GlcNAc...) asparagine glycan is attached at N101.

The protein belongs to the alpha/beta interferon family. In terms of processing, N-glycosylated.

Its subcellular location is the secreted. In terms of biological role, has antiviral and antiproliferative activities. Produced by macrophages and stimulates the production of two enzymes: a protein kinase and an oligoadenylate synthetase. During viral infection, mediates antiviral effect, either directly by inducing interferon-stimulated genes, either indirectly through stimulation of natural killer cells enabling them to control viral replication. The chain is Interferon alpha-11 (Ifna11) from Mus musculus (Mouse).